The sequence spans 553 residues: Transcriptional regulator HilA (553 aa).

A DNA-binding region (ompR/PhoB-type) is located at residues 11-107; the sequence is NKKFVFDDFI…LYGQGYRFNR (97 aa). 4-aspartylphosphate is present on D62. A TPR repeat occupies 372–405; it reads ADIKYYYGWNLFMAGQLEEALQTINECLKLDPTR.

In terms of biological role, the main transcriptional regulator of the Salmonella pathogenicity island 1 (SPI1) gene expression. Activates the expression of invasion genes by a direct action at their promoters and also indirectly by increasing the level of invF. Also binds upstream of prgH and directly activates the expression of prgHIJK operon. This is Transcriptional regulator HilA (hilA) from Salmonella paratyphi A (strain ATCC 9150 / SARB42).